The chain runs to 315 residues: MMTIQRYSLVFCAIFATCWTASVVNNKQVIDTSVPQTETTLNDADFHSDLHQRYDLQTLGIKVKDDPTIGNYSEGDILLESPKKFVEENNKLGRNAIKQIYRRWPNNEIPYTLSSQYGSYARSVIANAMNEYHTKTCVKFVARDPSKHHDYLWIHPDEGCYSLVGKTGGKQPVSLDSGCIQVGTIVHELMHAVGFFHEQSRQDRDSYIDVVWQNVMNGADDQFEKYNLNVISHLDEPYDYASIMHYGPYAFSGSGKKTLVPKKSGSERMGQRVKFSDIDVRKINKLYNCPGVSGNNNNNNNNQINSNSIVNHPQV.

Positions 1 to 20 (MMTIQRYSLVFCAIFATCWT) are cleaved as a signal peptide. Asparagine 71 carries N-linked (GlcNAc...) asparagine glycosylation. One can recognise a Peptidase M12A domain in the interval 95–290 (NAIKQIYRRW…RKINKLYNCP (196 aa)). Intrachain disulfides connect cysteine 137–cysteine 289 and cysteine 160–cysteine 179. Histidine 187 provides a ligand contact to Zn(2+). Glutamate 188 is a catalytic residue. Positions 191 and 197 each coordinate Zn(2+). Residues 291–315 (GVSGNNNNNNNNQINSNSIVNHPQV) are disordered.

The cofactor is Zn(2+). Digestive tract. Found in the pharynx cells of the procorpus, metacorpus, isthmus and terminal bulb, and in the terminal bulb lumen.

The protein localises to the secreted. In terms of biological role, metalloprotease. May be involved in digestion. This Caenorhabditis elegans protein is Zinc metalloproteinase nas-4 (nas-4).